Consider the following 425-residue polypeptide: Histone-binding protein RBBP7 (425 aa).

7 WD repeats span residues 47–122 (QWLP…KINH), 128–173 (RARY…LRLR), 181–217 (GLSW…KVVD), 228–269 (VVED…HSVD), 275–312 (VNCL…LHSF), 318–369 (EIFQ…LFIH), and 376–403 (ISDF…IWQM).

It belongs to the WD repeat RBAP46/RBAP48/MSI1 family. In terms of assembly, binds directly to helix 1 of the histone fold of histone H4, a region that is not accessible when H4 is in chromatin.

The protein localises to the nucleus. Functionally, core histone-binding subunit that may target chromatin remodeling factors, histone acetyltransferases and histone deacetylases to their histone substrates in a manner that is regulated by nucleosomal DNA. Component of several complexes which regulate chromatin metabolism. This Xenopus tropicalis (Western clawed frog) protein is Histone-binding protein RBBP7 (rbbp7).